Reading from the N-terminus, the 84-residue chain is Cell division topological specificity factor (84 aa).

It belongs to the MinE family.

In terms of biological role, prevents the cell division inhibition by proteins MinC and MinD at internal division sites while permitting inhibition at polar sites. This ensures cell division at the proper site by restricting the formation of a division septum at the midpoint of the long axis of the cell. In Pseudomonas syringae pv. tomato (strain ATCC BAA-871 / DC3000), this protein is Cell division topological specificity factor.